The following is a 478-amino-acid chain: Cytochrome c-552 (478 aa).

The N-terminal stretch at 1 to 26 (MTRIKINARRIFSLLIPFFFFTSVHA) is a signal peptide. His-94 serves as a coordination point for heme c. Cys-122, Cys-125, and Lys-126 together coordinate heme. Residues Cys-160, Cys-163, His-164, Cys-209, Cys-212, and His-213 each contribute to the heme c site. Ca(2+) contacts are provided by Glu-215, Tyr-216, Lys-261, and Gln-263. Tyr-216 provides a ligand contact to substrate. His-264 serves as a coordination point for substrate. Heme c is bound by residues His-275, Cys-282, Cys-285, His-286, His-301, Cys-314, Cys-317, His-318, and His-393.

Belongs to the cytochrome c-552 family. Ca(2+) is required as a cofactor. The cofactor is heme c.

The protein localises to the periplasm. It catalyses the reaction 6 Fe(III)-[cytochrome c] + NH4(+) + 2 H2O = 6 Fe(II)-[cytochrome c] + nitrite + 8 H(+). Its pathway is nitrogen metabolism; nitrate reduction (assimilation). Catalyzes the reduction of nitrite to ammonia, consuming six electrons in the process. The protein is Cytochrome c-552 of Escherichia coli O157:H7 (strain EC4115 / EHEC).